Reading from the N-terminus, the 334-residue chain is Protein-methionine-sulfoxide reductase catalytic subunit MsrP (334 aa).

Positions 1–44 (MKKNQFLKESDVTAESVFFMKRRQVLKALGISATALSLPHAAHA) form a signal peptide, tat-type signal. Residues asparagine 88, 91 to 92 (YE), cysteine 146, threonine 181, asparagine 233, arginine 238, and 249 to 251 (GIK) each bind Mo-molybdopterin.

The protein belongs to the MsrP family. In terms of assembly, heterodimer of a catalytic subunit (MsrP) and a heme-binding subunit (MsrQ). Mo-molybdopterin is required as a cofactor. Exported by the Tat system. Can also be exported by the Sec system.

The protein localises to the periplasm. It carries out the reaction L-methionyl-[protein] + a quinone + H2O = L-methionyl-(S)-S-oxide-[protein] + a quinol. It catalyses the reaction L-methionyl-[protein] + a quinone + H2O = L-methionyl-(R)-S-oxide-[protein] + a quinol. In terms of biological role, part of the MsrPQ system that repairs oxidized periplasmic proteins containing methionine sulfoxide residues (Met-O), using respiratory chain electrons. Thus protects these proteins from oxidative-stress damage caused by reactive species of oxygen and chlorine. MsrPQ is essential for the maintenance of envelope integrity under bleach stress, rescuing a wide series of structurally unrelated periplasmic proteins from methionine oxidation, including the primary periplasmic chaperone SurA and the lipoprotein Pal. The catalytic subunit MsrP is non-stereospecific, being able to reduce both (R-) and (S-) diastereoisomers of methionine sulfoxide. Can catalyze the reduction of a variety of substrates in vitro, including dimethyl sulfoxide, trimethylamine N-oxide, phenylmethyl sulfoxide and L-methionine sulfoxide. Cannot reduce cyclic N-oxides. Shows no activity as sulfite oxidase. This Escherichia coli (strain K12) protein is Protein-methionine-sulfoxide reductase catalytic subunit MsrP.